Reading from the N-terminus, the 132-residue chain is Translation initiation factor 2 subunit beta (132 aa).

A disordered region spans residues 1-30 (MDYEEQLDRAMDEKPDVTGSETRFEVPDPN).

It belongs to the eIF-2-beta/eIF-5 family. As to quaternary structure, heterotrimer composed of an alpha, a beta and a gamma chain.

Its function is as follows. eIF-2 functions in the early steps of protein synthesis by forming a ternary complex with GTP and initiator tRNA. The sequence is that of Translation initiation factor 2 subunit beta from Halobacterium salinarum (strain ATCC 29341 / DSM 671 / R1).